The primary structure comprises 447 residues: Nisin biosynthesis sensor protein NisK (447 aa).

2 helical membrane-spanning segments follow: residues 15–35 and 147–167; these read VIEIIIGTCLLILLLLGLTFF and TYLFFFLGEIILIIFSVYHLI. The region spanning 235–447 is the Histidine kinase domain; sequence ALSHDVKTPL…GAEVILKIKK (213 aa). The residue at position 238 (histidine 238) is a Phosphohistidine; by autocatalysis.

Its subcellular location is the cell membrane. It carries out the reaction ATP + protein L-histidine = ADP + protein N-phospho-L-histidine.. Its function is as follows. Member of the two-component regulatory system NisK/NisR involved in the regulation of the biosynthesis of lantibiotic nisin. NisK may function as a membrane-associated protein kinase that phosphorylates NisR in response to environmental signals. This chain is Nisin biosynthesis sensor protein NisK (nisK), found in Lactococcus lactis subsp. lactis (Streptococcus lactis).